The chain runs to 88 residues: Small ribosomal subunit protein bS16c (88 aa).

Belongs to the bacterial ribosomal protein bS16 family.

It localises to the plastid. Its subcellular location is the chloroplast. This is Small ribosomal subunit protein bS16c from Solanum bulbocastanum (Wild potato).